The chain runs to 615 residues: DNA mismatch repair protein MutL (615 aa).

The protein belongs to the DNA mismatch repair MutL/HexB family.

Its function is as follows. This protein is involved in the repair of mismatches in DNA. It is required for dam-dependent methyl-directed DNA mismatch repair. May act as a 'molecular matchmaker', a protein that promotes the formation of a stable complex between two or more DNA-binding proteins in an ATP-dependent manner without itself being part of a final effector complex. The protein is DNA mismatch repair protein MutL of Histophilus somni (strain 2336) (Haemophilus somnus).